A 370-amino-acid polypeptide reads, in one-letter code: Chaperone protein DnaJ (370 aa).

The 65-residue stretch at 5 to 69 (DYYEVLGVDR…QKKAHYDQFG (65 aa)) folds into the J domain. Residues 128–210 (GKETTIEIPR…CGGKGKVRKR (83 aa)) form a CR-type zinc finger. Zn(2+) contacts are provided by C141, C144, C158, C161, C184, C187, C198, and C201. 4 CXXCXGXG motif repeats span residues 141–148 (CHTCSGSG), 158–165 (CPHCGGSG), 184–191 (CHHCEGTG), and 198–205 (CATCGGKG).

It belongs to the DnaJ family. Homodimer. Zn(2+) is required as a cofactor.

Its subcellular location is the cytoplasm. Participates actively in the response to hyperosmotic and heat shock by preventing the aggregation of stress-denatured proteins and by disaggregating proteins, also in an autonomous, DnaK-independent fashion. Unfolded proteins bind initially to DnaJ; upon interaction with the DnaJ-bound protein, DnaK hydrolyzes its bound ATP, resulting in the formation of a stable complex. GrpE releases ADP from DnaK; ATP binding to DnaK triggers the release of the substrate protein, thus completing the reaction cycle. Several rounds of ATP-dependent interactions between DnaJ, DnaK and GrpE are required for fully efficient folding. Also involved, together with DnaK and GrpE, in the DNA replication of plasmids through activation of initiation proteins. The sequence is that of Chaperone protein DnaJ from Halalkalibacterium halodurans (strain ATCC BAA-125 / DSM 18197 / FERM 7344 / JCM 9153 / C-125) (Bacillus halodurans).